The following is a 497-amino-acid chain: 3-octaprenyl-4-hydroxybenzoate carboxy-lyase (497 aa).

N175 contacts Mn(2+). Residues 178–180 (IYR), 192–194 (RWL), and 197–198 (RG) contribute to the prenylated FMN site. Position 241 (E241) interacts with Mn(2+). Catalysis depends on D290, which acts as the Proton donor.

The protein belongs to the UbiD family. Homohexamer. Prenylated FMN is required as a cofactor. Mn(2+) serves as cofactor.

The protein localises to the cell membrane. It catalyses the reaction a 4-hydroxy-3-(all-trans-polyprenyl)benzoate + H(+) = a 2-(all-trans-polyprenyl)phenol + CO2. It functions in the pathway cofactor biosynthesis; ubiquinone biosynthesis. Functionally, catalyzes the decarboxylation of 3-octaprenyl-4-hydroxy benzoate to 2-octaprenylphenol, an intermediate step in ubiquinone biosynthesis. In Escherichia coli O157:H7, this protein is 3-octaprenyl-4-hydroxybenzoate carboxy-lyase.